We begin with the raw amino-acid sequence, 382 residues long: RNA binding protein fox-1 homolog 1-like (382 aa).

Disordered stretches follow at residues 34 to 79 (QEAG…AAHP) and 94 to 148 (GPQH…QPKR). Residues 49-65 (YAPPPSYPPPGQAPPTP) are compositionally biased toward pro residues. Over residues 101 to 110 (ESITASNTDD) the composition is skewed to polar residues. The region spanning 147–223 (KRLHVSNIPF…RKIEVNNATA (77 aa)) is the RRM domain.

As to expression, expressed during muscle development in adaxial cells, somites, cardiac precursors, finbuds and jaw muscle cells.

It is found in the nucleus. RNA-binding protein that regulates alternative splicing events by binding to 5'-GCAUG-3' elements. Regulates alternative splicing of tissue-specific exons. The protein is RNA binding protein fox-1 homolog 1-like (rbfox1l) of Danio rerio (Zebrafish).